The chain runs to 292 residues: RWD domain-containing protein 2A (292 aa).

Positions 14–134 (LEMEMLFSMF…QWLQDNSASY (121 aa)) constitute an RWD domain.

The chain is RWD domain-containing protein 2A (RWDD2A) from Macaca fascicularis (Crab-eating macaque).